A 290-amino-acid chain; its full sequence is Agmatinase (290 aa).

Positions 112, 135, 137, 139, 216, and 218 each coordinate Mn(2+).

The protein belongs to the arginase family. Agmatinase subfamily. Mn(2+) serves as cofactor.

It catalyses the reaction agmatine + H2O = urea + putrescine. It functions in the pathway amine and polyamine biosynthesis; putrescine biosynthesis via agmatine pathway; putrescine from agmatine: step 1/1. Catalyzes the formation of putrescine from agmatine. This is Agmatinase (speB) from Bacillus anthracis.